A 152-amino-acid chain; its full sequence is Large ribosomal subunit protein bL9 (152 aa).

It belongs to the bacterial ribosomal protein bL9 family.

Its function is as follows. Binds to the 23S rRNA. The chain is Large ribosomal subunit protein bL9 from Synechococcus sp. (strain CC9311).